Consider the following 437-residue polypeptide: La-related protein 7 homolog (437 aa).

The HTH La-type RNA-binding domain maps to 38–145 (SKSPSLTIPK…KRKKKFDNRT (108 aa)). The 119-residue stretch at 279–397 (ELSQSCFLKI…QRSSIDEIKA (119 aa)) folds into the xRRM domain. Residues 417-427 (RRPVSKRKNKA) are compositionally biased toward basic residues. Residues 417–437 (RRPVSKRKNKAINKMSTEVKK) are disordered.

Belongs to the LARP7 family. As to quaternary structure, component of the telomerase holoenzyme complex composed minimally of the catalytic subunit p123 and the telomerase RNA template component. Post-translationally, the mature form of the protein is a protein of 43 kDa, which is derived from a 51 kDa precursor by proteolytic cleavage.

The protein resides in the nucleus. Its subcellular location is the chromosome. The protein localises to the telomere. In terms of biological role, RNA-binding protein required for assembly of the holoenzyme telomerase ribonucleoprotein (RNP) complex. Specifically binds telomerase RNA and promotes its assembly with catalytic subunit p123, thereby stimulating enzymatic activity and processivity of p123. Telomerase is a ribonucleoprotein enzyme essential that copies new telomeric repeats onto chromosome ends and functions to maintain cell division. The chain is La-related protein 7 homolog from Euplotes aediculatus (Ciliate).